The following is a 156-amino-acid chain: S-ribosylhomocysteine lyase (156 aa).

H56, H60, and C123 together coordinate Fe cation.

It belongs to the LuxS family. Homodimer. Fe cation serves as cofactor.

The enzyme catalyses S-(5-deoxy-D-ribos-5-yl)-L-homocysteine = (S)-4,5-dihydroxypentane-2,3-dione + L-homocysteine. In terms of biological role, involved in the synthesis of autoinducer 2 (AI-2) which is secreted by bacteria and is used to communicate both the cell density and the metabolic potential of the environment. The regulation of gene expression in response to changes in cell density is called quorum sensing. Catalyzes the transformation of S-ribosylhomocysteine (RHC) to homocysteine (HC) and 4,5-dihydroxy-2,3-pentadione (DPD). The chain is S-ribosylhomocysteine lyase from Staphylococcus aureus (strain bovine RF122 / ET3-1).